We begin with the raw amino-acid sequence, 208 residues long: MALVTKLLVASRNWKKLAELRRVLDNAGLSGLTLVSLNDVVPFDEAPEAGATFEDNALAKARDAFAATGLASVADDSGLEAAALGGMPGVLSARWSGSYGDDAGNTALLLAQLCDVPDERRSAAFVSACALVSESDEVVVRGVWPGTIAREPRGYGGFGYDSIFIPDGPGLGGRTVAQLRPAEKDAFSHRFRALTLLMPALRVLAMRT.

Serine 11 to lysine 16 contributes to the substrate binding site. Aspartate 76 (proton acceptor) is an active-site residue. Aspartate 76 contacts Mg(2+). Residues serine 77, phenylalanine 158 to aspartate 161, lysine 184, and histidine 189 to arginine 190 each bind substrate.

This sequence belongs to the HAM1 NTPase family. Homodimer. Requires Mg(2+) as cofactor.

It catalyses the reaction XTP + H2O = XMP + diphosphate + H(+). It carries out the reaction dITP + H2O = dIMP + diphosphate + H(+). The enzyme catalyses ITP + H2O = IMP + diphosphate + H(+). In terms of biological role, pyrophosphatase that catalyzes the hydrolysis of nucleoside triphosphates to their monophosphate derivatives, with a high preference for the non-canonical purine nucleotides XTP (xanthosine triphosphate), dITP (deoxyinosine triphosphate) and ITP. Seems to function as a house-cleaning enzyme that removes non-canonical purine nucleotides from the nucleotide pool, thus preventing their incorporation into DNA/RNA and avoiding chromosomal lesions. This chain is dITP/XTP pyrophosphatase, found in Mycobacterium leprae (strain TN).